A 239-amino-acid chain; its full sequence is Phosphoribosylaminoimidazole-succinocarboxamide synthase (239 aa).

It belongs to the SAICAR synthetase family.

The enzyme catalyses 5-amino-1-(5-phospho-D-ribosyl)imidazole-4-carboxylate + L-aspartate + ATP = (2S)-2-[5-amino-1-(5-phospho-beta-D-ribosyl)imidazole-4-carboxamido]succinate + ADP + phosphate + 2 H(+). The protein operates within purine metabolism; IMP biosynthesis via de novo pathway; 5-amino-1-(5-phospho-D-ribosyl)imidazole-4-carboxamide from 5-amino-1-(5-phospho-D-ribosyl)imidazole-4-carboxylate: step 1/2. This is Phosphoribosylaminoimidazole-succinocarboxamide synthase from Bacillus cereus (strain B4264).